A 445-amino-acid polypeptide reads, in one-letter code: Tubulin beta-3 chain (445 aa).

An MREI motif motif is present at residues Met1–Ile4. 8 residues coordinate GTP: Gln11, Glu69, Ser138, Gly142, Thr143, Gly144, Asn204, and Asn226. Glu69 lines the Mg(2+) pocket. The segment at Tyr425–Glu445 is disordered. A compositionally biased stretch (acidic residues) spans Thr429 to Glu445. The residue at position 438 (Glu438) is a 5-glutamyl polyglutamate.

It belongs to the tubulin family. As to quaternary structure, dimer of alpha and beta chains. A typical microtubule is a hollow water-filled tube with an outer diameter of 25 nm and an inner diameter of 15 nM. Alpha-beta heterodimers associate head-to-tail to form protofilaments running lengthwise along the microtubule wall with the beta-tubulin subunit facing the microtubule plus end conferring a structural polarity. Microtubules usually have 13 protofilaments but different protofilament numbers can be found in some organisms and specialized cells. Mg(2+) serves as cofactor. Some glutamate residues at the C-terminus are polyglycylated, resulting in polyglycine chains on the gamma-carboxyl group. Glycylation is mainly limited to tubulin incorporated into axonemes (cilia and flagella) whereas glutamylation is prevalent in neuronal cells, centrioles, axonemes, and the mitotic spindle. Both modifications can coexist on the same protein on adjacent residues, and lowering polyglycylation levels increases polyglutamylation, and reciprocally. The precise function of polyglycylation is still unclear. Post-translationally, some glutamate residues at the C-terminus are polyglutamylated, resulting in polyglutamate chains on the gamma-carboxyl group. Polyglutamylation plays a key role in microtubule severing by spastin (SPAST). SPAST preferentially recognizes and acts on microtubules decorated with short polyglutamate tails: severing activity by SPAST increases as the number of glutamates per tubulin rises from one to eight, but decreases beyond this glutamylation threshold. As to expression, highly expressed in testis.

It localises to the cytoplasm. The protein localises to the cytoskeleton. Functionally, tubulin is the major constituent of microtubules, a cylinder consisting of laterally associated linear protofilaments composed of alpha- and beta-tubulin heterodimers. Microtubules grow by the addition of GTP-tubulin dimers to the microtubule end, where a stabilizing cap forms. Below the cap, tubulin dimers are in GDP-bound state, owing to GTPase activity of alpha-tubulin. TUBB3 plays a role in dorsal root ganglion axon projection towards the spinal cord. This chain is Tubulin beta-3 chain, found in Gallus gallus (Chicken).